Reading from the N-terminus, the 736-residue chain is Phosphoribosylformylglycinamidine synthase subunit PurL (736 aa).

Residue histidine 48 is part of the active site. ATP is bound by residues tyrosine 51 and lysine 90. Mg(2+) is bound at residue glutamate 92. Substrate contacts are provided by residues 93-96 (SHNH) and arginine 115. Histidine 94 functions as the Proton acceptor in the catalytic mechanism. Aspartate 116 contacts Mg(2+). Residue glutamine 239 participates in substrate binding. Aspartate 267 is a binding site for Mg(2+). Position 311-313 (311-313 (ESQ)) interacts with substrate. Positions 492 and 529 each coordinate ATP. Position 530 (asparagine 530) interacts with Mg(2+). Residue serine 532 participates in substrate binding.

Belongs to the FGAMS family. Monomer. Part of the FGAM synthase complex composed of 1 PurL, 1 PurQ and 2 PurS subunits.

It is found in the cytoplasm. It catalyses the reaction N(2)-formyl-N(1)-(5-phospho-beta-D-ribosyl)glycinamide + L-glutamine + ATP + H2O = 2-formamido-N(1)-(5-O-phospho-beta-D-ribosyl)acetamidine + L-glutamate + ADP + phosphate + H(+). Its pathway is purine metabolism; IMP biosynthesis via de novo pathway; 5-amino-1-(5-phospho-D-ribosyl)imidazole from N(2)-formyl-N(1)-(5-phospho-D-ribosyl)glycinamide: step 1/2. Part of the phosphoribosylformylglycinamidine synthase complex involved in the purines biosynthetic pathway. Catalyzes the ATP-dependent conversion of formylglycinamide ribonucleotide (FGAR) and glutamine to yield formylglycinamidine ribonucleotide (FGAM) and glutamate. The FGAM synthase complex is composed of three subunits. PurQ produces an ammonia molecule by converting glutamine to glutamate. PurL transfers the ammonia molecule to FGAR to form FGAM in an ATP-dependent manner. PurS interacts with PurQ and PurL and is thought to assist in the transfer of the ammonia molecule from PurQ to PurL. In Beijerinckia indica subsp. indica (strain ATCC 9039 / DSM 1715 / NCIMB 8712), this protein is Phosphoribosylformylglycinamidine synthase subunit PurL.